We begin with the raw amino-acid sequence, 152 residues long: SUZ RNA-binding domain-containing (152 aa).

The residue at position 1 (Met-1) is an N-acetylmethionine. The disordered stretch occupies residues 30 to 152; that stretch reads TQKESRKSKS…DGSQGFKQRR (123 aa). Phosphoserine is present on residues Ser-37, Ser-39, and Ser-51. Residues 42–107 enclose the SUZ domain; the sequence is KVPIVIQDDS…ARKRILGSAS (66 aa). The segment covering 66-81 has biased composition (polar residues); it reads PTSNGVVSSPNSTSRP. Positions 89–100 are enriched in basic and acidic residues; sequence AQREAEYAEARK. Phosphoserine occurs at positions 105 and 107. Positions 111–152 constitute an SUZ-C domain; that stretch reads EQEKPILDRPTRISQPEDSRQPNNVIRQPLGPDGSQGFKQRR. Residues 113–130 are compositionally biased toward basic and acidic residues; sequence EKPILDRPTRISQPEDSR.

It belongs to the SZRD1 family.

This Homo sapiens (Human) protein is SUZ RNA-binding domain-containing (SZRD1).